Reading from the N-terminus, the 479-residue chain is Glutamyl-tRNA(Gln) amidotransferase subunit A (479 aa).

Residues Lys75 and Ser150 each act as charge relay system in the active site. The active-site Acyl-ester intermediate is Ser174.

This sequence belongs to the amidase family. GatA subfamily. Heterotrimer of A, B and C subunits.

It catalyses the reaction L-glutamyl-tRNA(Gln) + L-glutamine + ATP + H2O = L-glutaminyl-tRNA(Gln) + L-glutamate + ADP + phosphate + H(+). Its function is as follows. Allows the formation of correctly charged Gln-tRNA(Gln) through the transamidation of misacylated Glu-tRNA(Gln) in organisms which lack glutaminyl-tRNA synthetase. The reaction takes place in the presence of glutamine and ATP through an activated gamma-phospho-Glu-tRNA(Gln). The polypeptide is Glutamyl-tRNA(Gln) amidotransferase subunit A (Synechococcus elongatus (strain ATCC 33912 / PCC 7942 / FACHB-805) (Anacystis nidulans R2)).